Reading from the N-terminus, the 199-residue chain is Prefoldin subunit 3 (199 aa).

At methionine 1 the chain carries N-acetylmethionine.

It belongs to the prefoldin subunit alpha family. In terms of assembly, heterohexamer of two PFD-alpha type and four PFD-beta type subunits.

In terms of biological role, binds specifically to cytosolic chaperonin (c-CPN) and transfers target proteins to it. Binds to nascent polypeptide chain and promotes folding in an environment in which there are many competing pathways for nonnative proteins. The sequence is that of Prefoldin subunit 3 (PAC10) from Saccharomyces cerevisiae (strain ATCC 204508 / S288c) (Baker's yeast).